A 274-amino-acid chain; its full sequence is ATP synthase subunit a (274 aa).

A run of 5 helical transmembrane segments spans residues 43-63, 103-123, 149-169, 223-243, and 245-265; these read TLNI…LLVF, VIAP…MMDL, DVSI…FYSI, LIFI…LSVP, and AIFH…LTIV.

It belongs to the ATPase A chain family. As to quaternary structure, F-type ATPases have 2 components, CF(1) - the catalytic core - and CF(0) - the membrane proton channel. CF(1) has five subunits: alpha(3), beta(3), gamma(1), delta(1), epsilon(1). CF(0) has three main subunits: a(1), b(2) and c(9-12). The alpha and beta chains form an alternating ring which encloses part of the gamma chain. CF(1) is attached to CF(0) by a central stalk formed by the gamma and epsilon chains, while a peripheral stalk is formed by the delta and b chains.

Its subcellular location is the cell inner membrane. Functionally, key component of the proton channel; it plays a direct role in the translocation of protons across the membrane. This Yersinia pestis bv. Antiqua (strain Angola) protein is ATP synthase subunit a.